Here is a 254-residue protein sequence, read N- to C-terminus: Serine acetyltransferase (254 aa).

It belongs to the transferase hexapeptide repeat family.

It is found in the cytoplasm. The catalysed reaction is L-serine + acetyl-CoA = O-acetyl-L-serine + CoA. It functions in the pathway amino-acid biosynthesis; L-cysteine biosynthesis; L-cysteine from L-serine: step 1/2. This is Serine acetyltransferase (cysE) from Buchnera aphidicola subsp. Baizongia pistaciae (strain Bp).